The primary structure comprises 415 residues: MFDRAQSTIANVDPEIWQAIQQENVRQEEHIELIASENYTSPAVMAAQGSQLTNKYAEGYPGKRYYGGCEYVDIVEQLAIDRVKALFGAEAANVQPNSGSQANQGVFFAMLKPGDTIMGMSLAHGGHLTHGSPVNMSGKWFNVVSYGLNEAEDIDYEAAEQLAHEHKPKLIVAGASAFALKIDFERLAKIAKAVGAYLMVDMAHYAGLIAAGVYPNPVPHADFVTTTTHKSLRGPRGGVILMKAEYEKQINSAIFPGIQGGPLMHVIAAKAVAFKEALSPEFKEYQQKVVENARVLAQTLVKRGLRIVSGRTESHVMLVDLRAKNITGKAAEAALGNAHITVNKNAIPNDPEKPFVTSGVRLGSPAMTTRGFGPQEAELVGNLIADVLEHPEDAATIERVRAQVAELTKRFPVYR.

Residues L122 and 126–128 (GHL) each bind (6S)-5,6,7,8-tetrahydrofolate. K230 is subject to N6-(pyridoxal phosphate)lysine.

The protein belongs to the SHMT family. As to quaternary structure, homodimer. It depends on pyridoxal 5'-phosphate as a cofactor.

Its subcellular location is the cytoplasm. The catalysed reaction is (6R)-5,10-methylene-5,6,7,8-tetrahydrofolate + glycine + H2O = (6S)-5,6,7,8-tetrahydrofolate + L-serine. The protein operates within one-carbon metabolism; tetrahydrofolate interconversion. Its pathway is amino-acid biosynthesis; glycine biosynthesis; glycine from L-serine: step 1/1. Its function is as follows. Catalyzes the reversible interconversion of serine and glycine with tetrahydrofolate (THF) serving as the one-carbon carrier. This reaction serves as the major source of one-carbon groups required for the biosynthesis of purines, thymidylate, methionine, and other important biomolecules. Also exhibits THF-independent aldolase activity toward beta-hydroxyamino acids, producing glycine and aldehydes, via a retro-aldol mechanism. The protein is Serine hydroxymethyltransferase 1 of Burkholderia mallei (strain ATCC 23344).